The following is a 188-amino-acid chain: Proline-rich protein 3 (188 aa).

The disordered stretch occupies residues 1–157; it reads MPKRKKQNHH…DPQVMEDKSD (157 aa). Composition is skewed to pro residues over residues 35-46 and 69-82; these read IGPPSLLGPPPM and LIPP…PPWG. Low complexity predominate over residues 83-96; sequence RGPIRRGLGPRSSP. Residues 145–157 show a composition bias toward basic and acidic residues; the sequence is PKDDPQVMEDKSD. The C3H1-type zinc finger occupies 155–183; the sequence is KSDRPVCRHFAKKGHCRYEDLCAFYHPGV.

The sequence is that of Proline-rich protein 3 (PRR3) from Homo sapiens (Human).